A 612-amino-acid chain; its full sequence is Apoptosis-inducing factor 1, mitochondrial (612 aa).

2 short sequence motifs (mitochondrial localization signal) span residues 1–30 (MFRCGGLAGAFKQKLVPLVRSVCVQRPKQR) and 62–88 (KMDNSVLVLIVGLSTIGAGAYAYKTIK). The N-terminal 53 residues, 1-53 (MFRCGGLAGAFKQKLVPLVRSVCVQRPKQRNRLPGNLFQQWRVPLELQMARQM), are a transit peptide targeting the mitochondrion. 2 propeptides (removed in mature form) span residues 54-100 (ASSG…RIMG) and 55-101 (SSGP…IMGL). Position 108 is an N6-succinyllysine (Lys108). A Phosphoserine modification is found at Ser115. The interval 133–482 (FLLIGGGTAA…KPYWHQSMFW (350 aa)) is FAD-dependent oxidoreductase. FAD-binding positions include 137-141 (GGGTA), 163-164 (ED), Arg171, and Lys176. NAD(+) is bound at residue Trp195. FAD is bound at residue Val232. Residue Lys254 forms a Glycyl lysine isopeptide (Lys-Gly) (interchain with G-Cter in ubiquitin) linkage. Position 267 is a phosphoserine (Ser267). Arg284 is a binding site for FAD. NAD(+)-binding positions include 307 to 310 (GGFL), Glu335, and Lys341. Position 370 is a phosphoserine (Ser370). The residue at position 387 (Lys387) is an N6-acetyllysine. Gly398 contacts NAD(+). FAD is bound at residue Asp437. The Nuclear localization signal signature appears at 445–450 (KLGRRR). NAD(+)-binding positions include 452–453 (EH), Trp482, and Glu492. Residues 453–454 (HH) and Trp482 contribute to the FAD site. A compositionally biased stretch (polar residues) spans 512–528 (AQDNPKSATEQSGTGIR). Positions 512–551 (AQDNPKSATEQSGTGIRSESETESEASEITIPPSDPAVPQ) are disordered. At Thr520 the chain carries Phosphothreonine. Residues Ser523 and Ser529 each carry the phosphoserine modification. NAD(+) is bound at residue Asn582. N6-acetyllysine is present on Lys592.

The protein belongs to the FAD-dependent oxidoreductase family. Monomer (oxidized form). Homodimer (reduced form). Upon reduction with NADH, undergoes dimerization and forms tight, long-lived FADH2-NAD charge transfer complexes (CTC) resistant to oxidation. Also dimerizes with isoform 3 preventing its release from mitochondria. Interacts with XIAP/BIRC4. Interacts (via N-terminus) with EIF3G (via C-terminus). Interacts with PRELID1. Interacts with CHCHD4; the interaction increases in presence of NADH. Interacts with processed form of PARP1 (Poly [ADP-ribose] polymerase 1, processed C-terminus); interaction is mediated with poly-ADP-ribose chains attached to PARP1, promoting translocation into the nucleus. FAD is required as a cofactor. Post-translationally, under normal conditions, a 54-residue N-terminal segment is first proteolytically removed during or just after translocation into the mitochondrial intermembrane space (IMS) by the mitochondrial processing peptidase (MPP) to form the inner-membrane-anchored mature form (AIFmit). During apoptosis, it is further proteolytically processed at amino-acid position 101 leading to the generation of the mature form, which is confined to the mitochondrial IMS in a soluble form (AIFsol). AIFsol is released to the cytoplasm in response to specific death signals, and translocated to the nucleus, where it induces nuclear apoptosis in a caspase-independent manner. In terms of processing, ubiquitination by XIAP/BIRC4 does not lead to proteasomal degradation. Ubiquitination at Lys-254 by XIAP/BIRC4 blocks its ability to bind DNA and induce chromatin degradation, thereby inhibiting its ability to induce cell death.

It localises to the mitochondrion intermembrane space. It is found in the mitochondrion inner membrane. Its subcellular location is the cytoplasm. The protein resides in the nucleus. The protein localises to the perinuclear region. The enzyme catalyses A + NADH + H(+) = AH2 + NAD(+). Its function is as follows. Functions both as NADH oxidoreductase and as regulator of apoptosis. In response to apoptotic stimuli, it is released from the mitochondrion intermembrane space into the cytosol and to the nucleus, where it functions as a proapoptotic factor in a caspase-independent pathway. Release into the cytoplasm is mediated upon binding to poly-ADP-ribose chains. The soluble form (AIFsol) found in the nucleus induces 'parthanatos' i.e. caspase-independent fragmentation of chromosomal DNA. Binds to DNA in a sequence-independent manner. Interacts with EIF3G, and thereby inhibits the EIF3 machinery and protein synthesis, and activates caspase-7 to amplify apoptosis. Plays a critical role in caspase-independent, pyknotic cell death in hydrogen peroxide-exposed cells. In contrast, participates in normal mitochondrial metabolism. Plays an important role in the regulation of respiratory chain biogenesis by interacting with CHCHD4 and controlling CHCHD4 mitochondrial import. This chain is Apoptosis-inducing factor 1, mitochondrial (Aifm1), found in Rattus norvegicus (Rat).